Here is a 1108-residue protein sequence, read N- to C-terminus: TBC1 domain family member 8B (1108 aa).

GRAM domains follow at residues 143-210 and 283-351; these read LRFE…ERTS and QSFR…ELPD. Residues 469-656 enclose the Rab-GAP TBC domain; the sequence is GVPETLRGEL…NVVDCFFYDG (188 aa). The 36-residue stretch at 822–857 folds into the EF-hand domain; that stretch reads HSRSLARSAFHLLDENGDGLVNFKEFICGLDILYNR. Aspartate 835, asparagine 837, aspartate 839, and glutamate 846 together coordinate Ca(2+). Residues 961 to 1059 form a disordered region; that stretch reads GRKLQDSSPQ…PTDTPSSPCT (99 aa). A compositionally biased stretch (low complexity) spans 967-998; the sequence is SSPQKTPQTTPTSTSQPESSPTKPTSPESETP. The segment covering 1010–1024 has biased composition (polar residues); that stretch reads SPVSQHETAPSHSDI. Over residues 1025–1057 the composition is skewed to low complexity; the sequence is TPNSTSHPSTPTSSPTETSSPVLDTPTDTPSSP.

It localises to the cytoplasm. It is found in the cytosol. In terms of biological role, involved in vesicular recycling, probably as a GTPase-activating protein for Rab family protein(s). This Danio rerio (Zebrafish) protein is TBC1 domain family member 8B (tbc1d8b).